The chain runs to 633 residues: E3 ubiquitin-protein ligase ZSWIM2 (633 aa).

The segment at 54 to 87 (FRVFLGNPHVCNCSTFPKGGELCKHICWVLLKKF) adopts an SWIM-type zinc-finger fold. The RING-type 1 zinc finger occupies 147 to 198 (CSICQELLLEKKLPVTFCRFGCGNSIHIKCMKILANYQSTSNTSMLKCPLCR). The ZZ-type zinc-finger motif lies at 229-280 (HLGIPCNNCKQFPIEGKCYKCTECIEYHLCQECFDSCCHLSHTFTFREKRNQ). Zn(2+) is bound by residues Cys234, Cys237, Cys249, Cys252, Cys258, Cys261, His267, and His270. An RING-type 2 zinc finger spans residues 344–388 (CLLCLKAFHLGQHTRLLPCTHKFHRKCIDNWLFHKCNSCPIDGQV).

Dimer. Interacts with UBE2D1. In terms of processing, polyubiquitinated. Polyubiquitination is followed by degradation via the proteasome. Expression is testis-specific.

It catalyses the reaction S-ubiquitinyl-[E2 ubiquitin-conjugating enzyme]-L-cysteine + [acceptor protein]-L-lysine = [E2 ubiquitin-conjugating enzyme]-L-cysteine + N(6)-ubiquitinyl-[acceptor protein]-L-lysine.. Its function is as follows. E3 ubiquitin-protein ligase involved in the regulation of Fas-, DR3- and DR4-mediated apoptosis. Functions in conjunction with the UBE2D1, UBE2D3 and UBE2E1 E2 ubiquitin-conjugating enzymes. The sequence is that of E3 ubiquitin-protein ligase ZSWIM2 from Homo sapiens (Human).